A 345-amino-acid polypeptide reads, in one-letter code: Protein RecA (345 aa).

67–74 contributes to the ATP binding site; it reads GPESSGKT.

The protein belongs to the RecA family.

It is found in the cytoplasm. Functionally, can catalyze the hydrolysis of ATP in the presence of single-stranded DNA, the ATP-dependent uptake of single-stranded DNA by duplex DNA, and the ATP-dependent hybridization of homologous single-stranded DNAs. It interacts with LexA causing its activation and leading to its autocatalytic cleavage. The protein is Protein RecA of Acidothermus cellulolyticus (strain ATCC 43068 / DSM 8971 / 11B).